Reading from the N-terminus, the 261-residue chain is Cytochrome c oxidase subunit 3 (261 aa).

The Mitochondrial matrix segment spans residues 1-15; the sequence is MTHQTHAYHMVNPSP. Residues 16–34 form a helical membrane-spanning segment; the sequence is WPLTGALSALLMTSGLIMW. Topologically, residues 35 to 40 are mitochondrial intermembrane; the sequence is FHFNST. The chain crosses the membrane as a helical span at residues 41–66; sequence TLLMLGLTTNMLTMYQWWRDVVREST. At 67–72 the chain is on the mitochondrial matrix side; sequence FQGHHT. A helical transmembrane segment spans residues 73–105; it reads PNVQKGLRYGMILFIISEVLFFTGFFWAFYHSS. At 106–128 the chain is on the mitochondrial intermembrane side; it reads LAPTPELGGCWPPTGIHPLNPLE. Residues 129-152 form a helical membrane-spanning segment; the sequence is VPLLNTSVLLASGVSITWAHHSLM. At 153–155 the chain is on the mitochondrial matrix side; the sequence is EGN. A helical transmembrane segment spans residues 156–183; the sequence is RNHMLQALFITIALGVYFTLLQASEYYE. The Mitochondrial intermembrane portion of the chain corresponds to 184–190; sequence APFTISD. Residues 191-223 form a helical membrane-spanning segment; it reads GVYGSTFFVATGFHGLHVIIGSTFLIVCFFRQL. Residues 224-232 lie on the Mitochondrial matrix side of the membrane; that stretch reads KFHFTSSHH. Residues 233–256 form a helical membrane-spanning segment; the sequence is FGFEAAAWYWHFVDVVWLFLYVSI. Residues 257–261 are Mitochondrial intermembrane-facing; the sequence is YWWGS.

This sequence belongs to the cytochrome c oxidase subunit 3 family. In terms of assembly, component of the cytochrome c oxidase (complex IV, CIV), a multisubunit enzyme composed of 14 subunits. The complex is composed of a catalytic core of 3 subunits MT-CO1, MT-CO2 and MT-CO3, encoded in the mitochondrial DNA, and 11 supernumerary subunits COX4I, COX5A, COX5B, COX6A, COX6B, COX6C, COX7A, COX7B, COX7C, COX8 and NDUFA4, which are encoded in the nuclear genome. The complex exists as a monomer or a dimer and forms supercomplexes (SCs) in the inner mitochondrial membrane with NADH-ubiquinone oxidoreductase (complex I, CI) and ubiquinol-cytochrome c oxidoreductase (cytochrome b-c1 complex, complex III, CIII), resulting in different assemblies (supercomplex SCI(1)III(2)IV(1) and megacomplex MCI(2)III(2)IV(2)).

The protein localises to the mitochondrion inner membrane. It carries out the reaction 4 Fe(II)-[cytochrome c] + O2 + 8 H(+)(in) = 4 Fe(III)-[cytochrome c] + 2 H2O + 4 H(+)(out). In terms of biological role, component of the cytochrome c oxidase, the last enzyme in the mitochondrial electron transport chain which drives oxidative phosphorylation. The respiratory chain contains 3 multisubunit complexes succinate dehydrogenase (complex II, CII), ubiquinol-cytochrome c oxidoreductase (cytochrome b-c1 complex, complex III, CIII) and cytochrome c oxidase (complex IV, CIV), that cooperate to transfer electrons derived from NADH and succinate to molecular oxygen, creating an electrochemical gradient over the inner membrane that drives transmembrane transport and the ATP synthase. Cytochrome c oxidase is the component of the respiratory chain that catalyzes the reduction of oxygen to water. Electrons originating from reduced cytochrome c in the intermembrane space (IMS) are transferred via the dinuclear copper A center (CU(A)) of subunit 2 and heme A of subunit 1 to the active site in subunit 1, a binuclear center (BNC) formed by heme A3 and copper B (CU(B)). The BNC reduces molecular oxygen to 2 water molecules using 4 electrons from cytochrome c in the IMS and 4 protons from the mitochondrial matrix. The chain is Cytochrome c oxidase subunit 3 (MT-CO3) from Gazella spekei (Speke's gazelle).